A 232-amino-acid chain; its full sequence is tRNA (guanine-N(7)-)-methyltransferase (232 aa).

4 residues coordinate S-adenosyl-L-methionine: glutamate 63, glutamate 88, aspartate 115, and aspartate 137. Aspartate 137 is an active-site residue. Substrate is bound by residues lysine 141, aspartate 173, and 211-214 (TRYE).

The protein belongs to the class I-like SAM-binding methyltransferase superfamily. TrmB family.

The catalysed reaction is guanosine(46) in tRNA + S-adenosyl-L-methionine = N(7)-methylguanosine(46) in tRNA + S-adenosyl-L-homocysteine. It functions in the pathway tRNA modification; N(7)-methylguanine-tRNA biosynthesis. In terms of biological role, catalyzes the formation of N(7)-methylguanine at position 46 (m7G46) in tRNA. This Rhizobium meliloti (strain 1021) (Ensifer meliloti) protein is tRNA (guanine-N(7)-)-methyltransferase.